Consider the following 574-residue polypeptide: FAD-linked oxidoreductase penH (574 aa).

The N-terminal stretch at 1–25 is a signal peptide; sequence MLPRALTLSALLALLLAIYLALAPA. N-linked (GlcNAc...) asparagine glycans are attached at residues N48, N107, N193, N368, and N385. An FAD-binding PCMH-type domain is found at 121-305; that stretch reads HQGRIPLYAA…VRVTMRTYPD (185 aa).

Belongs to the oxygen-dependent FAD-linked oxidoreductase family. Requires FAD as cofactor.

The enzyme catalyses peniprequinolone + A = yaequinolone E + AH2. It participates in secondary metabolite biosynthesis. The protein operates within alkaloid biosynthesis. Its pathway is mycotoxin biosynthesis. Its function is as follows. FAD-linked oxidoreductase; part of the gene cluster that mediates the biosynthesis of penigequinolones, potent insecticidal alkaloids that contain a highly modified 10-carbon prenyl group. The first stage is catalyzed by the nonribosomal peptide synthetase penN that condenses anthranilic acid and O-methyl-L-tyrosine to produce 4'-methoxycyclopeptin. 4'-methoxycyclopeptin is then converted to 4'-methoxydehydrocyclopeptin by the ketoglutarate-dependent dioxygenase penM through dehydrogenation to form a double bond between C-alpha and C-beta of the O-methyltyrosine side chain. PenM also converts its first product methoxydehydrocyclopeptin to 4'-methoxycyclopenin. The following conversion of 4'methoxycyclopenin into 4'-methoxyviridicatin is catalyzed by the cyclopenase penL. 4'-methoxyviridicatin is the precursor of quinolone natural products, and is further converted to quinolinone B. The prenyltransferase penI then catalyzes the canonical Friedel-Crafts alkylation of quinolinone B with dimethylallyl cation to yield dimethylallyl quinolone, which is subjected to FAD-dependent dehydrogenation by the FAD-linked oxidoreductase penH to yield conjugated aryl diene. The delta(3') double bond then serves as the site of the second alkylation with DMAPP catalyzed by the prenyltransferase penG to yield a carbenium ion intermediate, which can be attacked by H(2)O to yield a styrenyl quinolone containing a C3'-hydroxyprenyl chain, or undergo cyclization to yield yaequinolones J1 and J2. The conversion of the styrenyl quinolone into the tetrahydrofuran-containing yaequinolone C is performed by the FAD-dependent monooxygenase penE and involves epoxidation of the terminal C7'-C8' olefin, followed by epoxide ring opening initiated by the C3' hydroxyl group. The predicted cysteine hydrolase penJ acts as an epoxide hydrolase that enhances the rate of the 5-exo-tet cyclization step, increasing the yield of yaequinolone C. PenF catalyzes the cationic rearrangement of the epoxide formed by penE (before ring opening to produce yaequinolone C) into yaequinolone D. Finally, the short-chain dehydrogenase/reductase (SDR)-like reductase penD, catalyzes both the dehydration of yaequinolone D and the reduction of the resulting oxonium to yield penigequinolone. This Penicillium thymicola protein is FAD-linked oxidoreductase penH.